Here is a 353-residue protein sequence, read N- to C-terminus: Mannonate dehydratase (353 aa).

The protein belongs to the mannonate dehydratase family. Requires Fe(2+) as cofactor. Mn(2+) serves as cofactor.

The catalysed reaction is D-mannonate = 2-dehydro-3-deoxy-D-gluconate + H2O. Its pathway is carbohydrate metabolism; pentose and glucuronate interconversion. In terms of biological role, catalyzes the dehydration of D-mannonate. The protein is Mannonate dehydratase of Burkholderia cenocepacia (strain ATCC BAA-245 / DSM 16553 / LMG 16656 / NCTC 13227 / J2315 / CF5610) (Burkholderia cepacia (strain J2315)).